The chain runs to 306 residues: N-acetylmuramic acid 6-phosphate etherase (306 aa).

One can recognise an SIS domain in the interval 55–218 (IVPRMKKGGR…STGVMIKLGK (164 aa)). E83 (proton donor) is an active-site residue. The active site involves E114.

This sequence belongs to the GCKR-like family. MurNAc-6-P etherase subfamily. In terms of assembly, homodimer.

The enzyme catalyses N-acetyl-D-muramate 6-phosphate + H2O = N-acetyl-D-glucosamine 6-phosphate + (R)-lactate. It participates in amino-sugar metabolism; N-acetylmuramate degradation. In terms of biological role, specifically catalyzes the cleavage of the D-lactyl ether substituent of MurNAc 6-phosphate, producing GlcNAc 6-phosphate and D-lactate. This is N-acetylmuramic acid 6-phosphate etherase from Caldanaerobacter subterraneus subsp. tengcongensis (strain DSM 15242 / JCM 11007 / NBRC 100824 / MB4) (Thermoanaerobacter tengcongensis).